We begin with the raw amino-acid sequence, 672 residues long: Hydrogenase-4 component B (672 aa).

The Periplasmic segment spans residues methionine 1–glutamine 5. The chain crosses the membrane as a helical span at residues leucine 6–glycine 26. The Cytoplasmic portion of the chain corresponds to leucine 27–leucine 30. A helical membrane pass occupies residues alanine 31–isoleucine 51. Residues threonine 52–serine 79 lie on the Periplasmic side of the membrane. Residues leucine 80–leucine 100 traverse the membrane as a helical segment. At threonine 101 to asparagine 119 the chain is on the cytoplasmic side. The helical transmembrane segment at isoleucine 120–leucine 140 threads the bilayer. Over phenylalanine 141–glycine 164 the chain is Periplasmic. Residues methionine 165–methionine 185 traverse the membrane as a helical segment. At glycine 186–threonine 199 the chain is on the cytoplasmic side. Residues leucine 200 to alanine 220 form a helical membrane-spanning segment. Residues lysine 221 to alanine 242 lie on the Periplasmic side of the membrane. The chain crosses the membrane as a helical span at residues serine 243–methionine 263. The Cytoplasmic portion of the chain corresponds to aspartate 264–proline 272. The chain crosses the membrane as a helical span at residues leucine 273–tyrosine 293. Residues alanine 294–asparagine 311 lie on the Periplasmic side of the membrane. Residues valine 312–leucine 332 form a helical membrane-spanning segment. Residues leucine 333–leucine 342 lie on the Cytoplasmic side of the membrane. Residues phenylalanine 343–isoleucine 363 form a helical membrane-spanning segment. At serine 364–threonine 384 the chain is on the periplasmic side. A helical membrane pass occupies residues alanine 385 to isoleucine 405. Over serine 406–leucine 427 the chain is Cytoplasmic. A helical membrane pass occupies residues alanine 428–valine 448. The Periplasmic portion of the chain corresponds to lysine 449 to methionine 474. A helical transmembrane segment spans residues isoleucine 475–leucine 495. Residues alanine 496–histidine 504 lie on the Cytoplasmic side of the membrane. Residues alanine 505–phenylalanine 525 traverse the membrane as a helical segment. Topologically, residues histidine 526–proline 531 are periplasmic. Residues serine 532 to cysteine 552 traverse the membrane as a helical segment. At arginine 553 to aspartate 651 the chain is on the cytoplasmic side. A helical membrane pass occupies residues phenylalanine 652–valine 672.

This sequence belongs to the complex I subunit 5 family.

Its subcellular location is the cell inner membrane. Functionally, possible component of hydrogenase 4. This chain is Hydrogenase-4 component B, found in Escherichia coli (strain K12).